The primary structure comprises 442 residues: tRNA modification GTPase MnmE (442 aa).

(6S)-5-formyl-5,6,7,8-tetrahydrofolate is bound by residues arginine 21, glutamate 79, and lysine 118. In terms of domain architecture, TrmE-type G spans 214-367; the sequence is GFKIAIIGKP…LKEELQNYLN (154 aa). Residue asparagine 224 coordinates K(+). Residues 224-229, 243-249, and 268-271 each bind GTP; these read NVGKSS, SDIAGTT, and DTAG. Serine 228 provides a ligand contact to Mg(2+). 3 residues coordinate K(+): serine 243, isoleucine 245, and threonine 248. Threonine 249 contacts Mg(2+). (6S)-5-formyl-5,6,7,8-tetrahydrofolate is bound at residue lysine 442.

This sequence belongs to the TRAFAC class TrmE-Era-EngA-EngB-Septin-like GTPase superfamily. TrmE GTPase family. As to quaternary structure, homodimer. Heterotetramer of two MnmE and two MnmG subunits. K(+) is required as a cofactor.

Its subcellular location is the cytoplasm. Functionally, exhibits a very high intrinsic GTPase hydrolysis rate. Involved in the addition of a carboxymethylaminomethyl (cmnm) group at the wobble position (U34) of certain tRNAs, forming tRNA-cmnm(5)s(2)U34. The polypeptide is tRNA modification GTPase MnmE (Campylobacter jejuni subsp. doylei (strain ATCC BAA-1458 / RM4099 / 269.97)).